The chain runs to 578 residues: Raftlin (578 aa).

Residue Gly2 is the site of N-myristoyl glycine attachment. Cys3 is lipidated: S-palmitoyl cysteine. Positions 169–184 (VNSAGSSAPVSTANST) are enriched in polar residues. Disordered stretches follow at residues 169–271 (VNSA…VHEE), 449–525 (FSRE…PGGL), and 551–578 (CTGH…VEEN). A phosphoserine mark is found at Ser183, Ser199, and Ser220. The segment covering 185–206 (EDARDAKNARGDHASLENEKPG) has biased composition (basic and acidic residues). The segment covering 457-466 (RQMRKSKGKL) has biased composition (basic residues). Basic and acidic residues predominate over residues 467–485 (SARDKQQAEENEKNLEDQS). Ser505 bears the Phosphoserine mark. Basic and acidic residues-rich tracts occupy residues 506-518 (EEMK…DKGE) and 557-578 (PGED…VEEN).

It belongs to the raftlin family. Interacts with TLR4; the interaction occurs in response to lipopolysaccharide stimulation. Interacts with CLTC; the interaction occurs in response to pathogens. Interacts with AP2A1 and AP2B1. Expressed in B-cells (at protein level). Expressed in dendritic cells and macrophages.

Its subcellular location is the cell membrane. It is found in the cytoplasm. The protein localises to the membrane raft. The protein resides in the endosome. It localises to the early endosome. Functionally, involved in protein trafficking via association with clathrin and AP2 complex. Upon bacterial lipopolysaccharide stimulation, mediates internalization of TLR4 to endosomes in dendritic cells and macrophages; and internalization of poly(I:C) to TLR3-positive endosomes in myeloid dendritic cells and epithelial cells; resulting in activation of TICAM1-mediated signaling and subsequent IFNB1 production. Involved in T-cell antigen receptor-mediated signaling by regulating tyrosine kinase LCK localization, T-cell dependent antibody production and cytokine secretion. May regulate B-cell antigen receptor-mediated signaling. May play a pivotal role in the formation and/or maintenance of lipid rafts. This is Raftlin (RFTN1) from Homo sapiens (Human).